Consider the following 63-residue polypeptide: Non-structural protein 3b (63 aa).

The polypeptide is Non-structural protein 3b (Avian infectious bronchitis virus (strain UK/183/66) (IBV)).